The chain runs to 518 residues: Nitrogenase iron-iron protein alpha chain (518 aa).

[8Fe-7S] cluster contacts are provided by Cys49 and Cys75. The [8Fe-9S-C-homocitryl] cluster site is built by Cys257 and His423.

In terms of assembly, hexamer of two alpha, two beta, and two delta chains. [8Fe-7S] cluster serves as cofactor. The cofactor is [8Fe-9S-C-homocitryl] cluster.

The catalysed reaction is N2 + 8 reduced [2Fe-2S]-[ferredoxin] + 16 ATP + 16 H2O = H2 + 8 oxidized [2Fe-2S]-[ferredoxin] + 2 NH4(+) + 16 ADP + 16 phosphate + 6 H(+). This iron-iron protein is part of the nitrogenase complex that catalyzes the key enzymatic reactions in nitrogen fixation. Other nitrogenase complexes utilize a molybdenum-iron protein or a vanadium-iron protein. In Ruminiclostridium hungatei (Clostridium hungatei), this protein is Nitrogenase iron-iron protein alpha chain (anfD).